The sequence spans 307 residues: Ribonuclease Z (307 aa).

7 residues coordinate Zn(2+): H63, H65, D67, H68, H141, D212, and H270. The active-site Proton acceptor is D67.

It belongs to the RNase Z family. In terms of assembly, homodimer. Zn(2+) is required as a cofactor.

It catalyses the reaction Endonucleolytic cleavage of RNA, removing extra 3' nucleotides from tRNA precursor, generating 3' termini of tRNAs. A 3'-hydroxy group is left at the tRNA terminus and a 5'-phosphoryl group is left at the trailer molecule.. Zinc phosphodiesterase, which displays some tRNA 3'-processing endonuclease activity. Probably involved in tRNA maturation, by removing a 3'-trailer from precursor tRNA. The chain is Ribonuclease Z from Bacillus cereus (strain ZK / E33L).